A 231-amino-acid polypeptide reads, in one-letter code: Large ribosomal subunit protein uL1 (231 aa).

Belongs to the universal ribosomal protein uL1 family. As to quaternary structure, part of the 50S ribosomal subunit.

Its function is as follows. Binds directly to 23S rRNA. The L1 stalk is quite mobile in the ribosome, and is involved in E site tRNA release. In terms of biological role, protein L1 is also a translational repressor protein, it controls the translation of the L11 operon by binding to its mRNA. This chain is Large ribosomal subunit protein uL1, found in Pseudomonas fluorescens (strain Pf0-1).